A 1315-amino-acid polypeptide reads, in one-letter code: Probable nucleoporin C890.06 (1315 aa).

The protein belongs to the non-repetitive/WGA-negative nucleoporin family.

Its subcellular location is the cytoplasm. The protein resides in the nucleus. This is Probable nucleoporin C890.06 from Schizosaccharomyces pombe (strain 972 / ATCC 24843) (Fission yeast).